An 872-amino-acid polypeptide reads, in one-letter code: Alanine--tRNA ligase (872 aa).

4 residues coordinate Zn(2+): histidine 567, histidine 571, cysteine 669, and histidine 673.

This sequence belongs to the class-II aminoacyl-tRNA synthetase family. Zn(2+) serves as cofactor.

It localises to the cytoplasm. The catalysed reaction is tRNA(Ala) + L-alanine + ATP = L-alanyl-tRNA(Ala) + AMP + diphosphate. In terms of biological role, catalyzes the attachment of alanine to tRNA(Ala) in a two-step reaction: alanine is first activated by ATP to form Ala-AMP and then transferred to the acceptor end of tRNA(Ala). Also edits incorrectly charged Ser-tRNA(Ala) and Gly-tRNA(Ala) via its editing domain. In Streptococcus agalactiae serotype V (strain ATCC BAA-611 / 2603 V/R), this protein is Alanine--tRNA ligase.